A 910-amino-acid chain; its full sequence is Seizure 6-like protein 2 (910 aa).

An N-terminal signal peptide occupies residues 1–27 (MGTPRAQHPPPPQLLFLILLSCPWIQG). At 28–844 (LPLKEEEILP…DPSRQLEGGN (817 aa)) the chain is on the extracellular side. Residues 41-48 (SETPTVAS) are O-glycosylated at one site. A disordered region spans residues 65–152 (EMGYLPGSDR…PLGPEGGEEE (88 aa)). The segment covering 123–145 (LTPPPGTTAPPPPSPASPGPPLG) has biased composition (pro residues). A disulfide bridge connects residues cysteine 173 and cysteine 202. Positions 173–286 (CNNNISEGEG…GGFRIHYQAY (114 aa)) constitute a CUB 1 domain. N-linked (GlcNAc...) asparagine glycans are attached at residues asparagine 176, asparagine 222, and asparagine 247. The region spanning 288 to 347 (LSCGFPPRPAHGDVSVTDLHPGGTATFHCDSGYQLQGEETLICLNGTRPSWNGETPSCMA) is the Sushi 1 domain. Disulfide bonds link cysteine 290–cysteine 330, cysteine 316–cysteine 345, cysteine 349–cysteine 376, cysteine 464–cysteine 508, cysteine 491–cysteine 523, and cysteine 527–cysteine 553. N-linked (GlcNAc...) asparagine glycans are attached at residues asparagine 332, asparagine 355, asparagine 373, asparagine 473, and asparagine 517. The 111-residue stretch at 349–459 (CGGTIHNATL…LLLSLRFEAF (111 aa)) folds into the CUB 2 domain. Positions 462-525 (DRCFAPFLAH…WNDTEPACKA (64 aa)) constitute a Sushi 2 domain. The CUB 3 domain maps to 527-638 (CGGELSEPAG…QGFVLHFKEV (112 aa)). N-linked (GlcNAc...) asparagine glycosylation is present at asparagine 641. Sushi domains lie at 642–701 (DTCP…ACQK), 703–766 (MTCA…KCAL), and 769–830 (EPCL…LCKV). Disulfide bonds link cysteine 644–cysteine 686, cysteine 672–cysteine 699, cysteine 705–cysteine 747, cysteine 733–cysteine 764, cysteine 771–cysteine 813, and cysteine 799–cysteine 828. The chain crosses the membrane as a helical span at residues 845-865 (LALAILLPLGLVIVLGSGVYI). Topologically, residues 866-910 (YYTKLQGKSLFGFSGSHSYSPITVESDFSNPLYEAGDTREYEVSI) are cytoplasmic.

The protein belongs to the SEZ6 family. O-glycosylated with core 1 or possibly core 8 glycans.

The protein resides in the cell membrane. It is found in the endoplasmic reticulum membrane. Its function is as follows. May contribute to specialized endoplasmic reticulum functions in neurons. The polypeptide is Seizure 6-like protein 2 (SEZ6L2) (Homo sapiens (Human)).